Here is an 89-residue protein sequence, read N- to C-terminus: Small ribosomal subunit protein uS15 (89 aa).

The protein belongs to the universal ribosomal protein uS15 family. In terms of assembly, part of the 30S ribosomal subunit. Forms a bridge to the 50S subunit in the 70S ribosome, contacting the 23S rRNA.

One of the primary rRNA binding proteins, it binds directly to 16S rRNA where it helps nucleate assembly of the platform of the 30S subunit by binding and bridging several RNA helices of the 16S rRNA. Its function is as follows. Forms an intersubunit bridge (bridge B4) with the 23S rRNA of the 50S subunit in the ribosome. The polypeptide is Small ribosomal subunit protein uS15 (Buchnera aphidicola subsp. Acyrthosiphon pisum (strain 5A)).